The chain runs to 493 residues: Trigger factor (493 aa).

The 86-residue stretch at 169–254 folds into the PPIase FKBP-type domain; that stretch reads GDRVTMDYLG…VKEVAAPAET (86 aa). The interval 439–493 is disordered; that stretch reads ELLAEDEDGDDTKPAKKSAKKKAAKAEDASAEGEEAAPKKKAAAKKKAADEGDAE.

This sequence belongs to the FKBP-type PPIase family. Tig subfamily.

Its subcellular location is the cytoplasm. It catalyses the reaction [protein]-peptidylproline (omega=180) = [protein]-peptidylproline (omega=0). Its function is as follows. Involved in protein export. Acts as a chaperone by maintaining the newly synthesized protein in an open conformation. Functions as a peptidyl-prolyl cis-trans isomerase. This is Trigger factor from Allorhizobium ampelinum (strain ATCC BAA-846 / DSM 112012 / S4) (Agrobacterium vitis (strain S4)).